A 356-amino-acid polypeptide reads, in one-letter code: Histidinol-phosphate aminotransferase (356 aa).

K214 is modified (N6-(pyridoxal phosphate)lysine).

It belongs to the class-II pyridoxal-phosphate-dependent aminotransferase family. Histidinol-phosphate aminotransferase subfamily. As to quaternary structure, homodimer. Pyridoxal 5'-phosphate serves as cofactor.

It catalyses the reaction L-histidinol phosphate + 2-oxoglutarate = 3-(imidazol-4-yl)-2-oxopropyl phosphate + L-glutamate. It participates in amino-acid biosynthesis; L-histidine biosynthesis; L-histidine from 5-phospho-alpha-D-ribose 1-diphosphate: step 7/9. This Shigella sonnei (strain Ss046) protein is Histidinol-phosphate aminotransferase.